Reading from the N-terminus, the 299-residue chain is ATP phosphoribosyltransferase (299 aa).

Belongs to the ATP phosphoribosyltransferase family. Long subfamily. As to quaternary structure, equilibrium between an active dimeric form, an inactive hexameric form and higher aggregates. Interconversion between the various forms is largely reversible and is influenced by the natural substrates and inhibitors of the enzyme. Mg(2+) is required as a cofactor.

It localises to the cytoplasm. It catalyses the reaction 1-(5-phospho-beta-D-ribosyl)-ATP + diphosphate = 5-phospho-alpha-D-ribose 1-diphosphate + ATP. The protein operates within amino-acid biosynthesis; L-histidine biosynthesis; L-histidine from 5-phospho-alpha-D-ribose 1-diphosphate: step 1/9. With respect to regulation, feedback inhibited by histidine. Catalyzes the condensation of ATP and 5-phosphoribose 1-diphosphate to form N'-(5'-phosphoribosyl)-ATP (PR-ATP). Has a crucial role in the pathway because the rate of histidine biosynthesis seems to be controlled primarily by regulation of HisG enzymatic activity. The chain is ATP phosphoribosyltransferase from Edwardsiella ictaluri (strain 93-146).